The following is a 256-amino-acid chain: Triosephosphate isomerase (256 aa).

Asn9 to Lys11 lines the substrate pocket. His94 serves as the catalytic Electrophile. The Proton acceptor role is filled by Glu166. Substrate contacts are provided by residues Gly172, Ser211, and Gly232 to Gly233.

This sequence belongs to the triosephosphate isomerase family. As to quaternary structure, homodimer.

The protein resides in the cytoplasm. The catalysed reaction is D-glyceraldehyde 3-phosphate = dihydroxyacetone phosphate. It functions in the pathway carbohydrate biosynthesis; gluconeogenesis. It participates in carbohydrate degradation; glycolysis; D-glyceraldehyde 3-phosphate from glycerone phosphate: step 1/1. Functionally, involved in the gluconeogenesis. Catalyzes stereospecifically the conversion of dihydroxyacetone phosphate (DHAP) to D-glyceraldehyde-3-phosphate (G3P). The protein is Triosephosphate isomerase of Natranaerobius thermophilus (strain ATCC BAA-1301 / DSM 18059 / JW/NM-WN-LF).